Reading from the N-terminus, the 382-residue chain is Galactokinase (382 aa).

34 to 37 is a binding site for substrate; that stretch reads EHTD. Position 124–130 (124–130) interacts with ATP; it reads GAGLSSS. Mg(2+) is bound by residues S130 and E162. D174 serves as the catalytic Proton acceptor. Y223 provides a ligand contact to substrate.

It belongs to the GHMP kinase family. GalK subfamily.

The protein localises to the cytoplasm. It carries out the reaction alpha-D-galactose + ATP = alpha-D-galactose 1-phosphate + ADP + H(+). Its pathway is carbohydrate metabolism; galactose metabolism. In terms of biological role, catalyzes the transfer of the gamma-phosphate of ATP to D-galactose to form alpha-D-galactose-1-phosphate (Gal-1-P). The sequence is that of Galactokinase from Shigella flexneri.